The chain runs to 583 residues: Cell division protein FtsZ (583 aa).

GTP is bound by residues 24-28 (GGGGN), 111-113 (GTG), Glu-142, Arg-146, and Asp-190. Disordered regions lie at residues 391 to 425 (HQQP…VQQA) and 510 to 583 (TNSL…RQSN). The span at 412 to 425 (APAALRPAQPVQQA) shows a compositional bias: low complexity.

The protein belongs to the FtsZ family. In terms of assembly, homodimer. Polymerizes to form a dynamic ring structure in a strictly GTP-dependent manner. Interacts directly with several other division proteins.

It is found in the cytoplasm. Its function is as follows. Essential cell division protein that forms a contractile ring structure (Z ring) at the future cell division site. The regulation of the ring assembly controls the timing and the location of cell division. One of the functions of the FtsZ ring is to recruit other cell division proteins to the septum to produce a new cell wall between the dividing cells. Binds GTP and shows GTPase activity. The sequence is that of Cell division protein FtsZ from Rhizobium radiobacter (Agrobacterium tumefaciens).